The chain runs to 431 residues: Na(+)-translocating NADH-quinone reductase subunit F (431 aa).

The chain crosses the membrane as a helical span at residues 10-30 (ISIASLVFCVIGLILSGVILI). Residues 41 to 133 (CKLKINNDDS…DMNLEIEERY (93 aa)) enclose the 2Fe-2S ferredoxin-type domain. [2Fe-2S] cluster contacts are provided by C76, C82, C85, and C117. Positions 136 to 286 (ASSWEGTVVS…SGPYGESFMK (151 aa)) constitute an FAD-binding FR-type domain.

This sequence belongs to the NqrF family. In terms of assembly, composed of six subunits; NqrA, NqrB, NqrC, NqrD, NqrE and NqrF. [2Fe-2S] cluster serves as cofactor. It depends on FAD as a cofactor.

It is found in the cell inner membrane. The enzyme catalyses a ubiquinone + n Na(+)(in) + NADH + H(+) = a ubiquinol + n Na(+)(out) + NAD(+). Functionally, NQR complex catalyzes the reduction of ubiquinone-1 to ubiquinol by two successive reactions, coupled with the transport of Na(+) ions from the cytoplasm to the periplasm. The first step is catalyzed by NqrF, which accepts electrons from NADH and reduces ubiquinone-1 to ubisemiquinone by a one-electron transfer pathway. This Chlamydia felis (strain Fe/C-56) (Chlamydophila felis) protein is Na(+)-translocating NADH-quinone reductase subunit F.